The sequence spans 248 residues: 1-(5-phosphoribosyl)-5-[(5-phosphoribosylamino)methylideneamino] imidazole-4-carboxamide isomerase (248 aa).

Asp-7 (proton acceptor) is an active-site residue. Asp-129 (proton donor) is an active-site residue.

It belongs to the HisA/HisF family.

The protein resides in the cytoplasm. The catalysed reaction is 1-(5-phospho-beta-D-ribosyl)-5-[(5-phospho-beta-D-ribosylamino)methylideneamino]imidazole-4-carboxamide = 5-[(5-phospho-1-deoxy-D-ribulos-1-ylimino)methylamino]-1-(5-phospho-beta-D-ribosyl)imidazole-4-carboxamide. It functions in the pathway amino-acid biosynthesis; L-histidine biosynthesis; L-histidine from 5-phospho-alpha-D-ribose 1-diphosphate: step 4/9. The chain is 1-(5-phosphoribosyl)-5-[(5-phosphoribosylamino)methylideneamino] imidazole-4-carboxamide isomerase from Aeromonas salmonicida (strain A449).